Here is a 50-residue protein sequence, read N- to C-terminus: Acidic phospholipase A2 1 (50 aa).

Positions 27, 29, and 31 each coordinate Ca(2+). The cysteines at positions 28 and 44 are disulfide-linked. Residue His47 is part of the active site. Position 48 (Asp48) interacts with Ca(2+).

Belongs to the phospholipase A2 family. Group II subfamily. D49 sub-subfamily. As to quaternary structure, monomer. The cofactor is Ca(2+). In terms of tissue distribution, expressed by the venom gland.

It localises to the secreted. The enzyme catalyses a 1,2-diacyl-sn-glycero-3-phosphocholine + H2O = a 1-acyl-sn-glycero-3-phosphocholine + a fatty acid + H(+). Its function is as follows. Snake venom phospholipase A2 (PLA2) that displays a potent enzymatic activity as measured by indirect hemolysis of red blood cells. Is neither lethal when injected into mice nor does it present anticoagulant activity. Displays a moderate inhibitory activity on the aggregation of platelets induced by low levels of ADP, thrombin and arachidonate. In contrast, strongly inhibits platelet aggregation induced by high doses of collagen. Shows myotoxic activity, increases the plasma creatine-kinase activity and induces edema and myonecrosis of mouse skeletal muscles. PLA2 catalyzes the calcium-dependent hydrolysis of the 2-acyl groups in 3-sn-phosphoglycerides. This chain is Acidic phospholipase A2 1, found in Lachesis muta muta (Bushmaster).